Reading from the N-terminus, the 463-residue chain is Membrane-bound lytic murein transglycosylase F (463 aa).

Positions 1-33 (MQSQDYKKRLKLQIIIILSIAVMSCGVPNVPTA) are cleaved as a signal peptide. The segment at 34–272 (LSSLLERESI…VLEDKYFGHI (239 aa)) is non-LT domain. Positions 273-463 (RQFDYVDSRA…LVWLDEQGKI (191 aa)) are LT domain. E317 is a catalytic residue.

This sequence in the N-terminal section; belongs to the bacterial solute-binding protein 3 family. In the C-terminal section; belongs to the transglycosylase Slt family.

Its subcellular location is the cell outer membrane. The enzyme catalyses Exolytic cleavage of the (1-&gt;4)-beta-glycosidic linkage between N-acetylmuramic acid (MurNAc) and N-acetylglucosamine (GlcNAc) residues in peptidoglycan, from either the reducing or the non-reducing ends of the peptidoglycan chains, with concomitant formation of a 1,6-anhydrobond in the MurNAc residue.. Functionally, murein-degrading enzyme that degrades murein glycan strands and insoluble, high-molecular weight murein sacculi, with the concomitant formation of a 1,6-anhydromuramoyl product. Lytic transglycosylases (LTs) play an integral role in the metabolism of the peptidoglycan (PG) sacculus. Their lytic action creates space within the PG sacculus to allow for its expansion as well as for the insertion of various structures such as secretion systems and flagella. The polypeptide is Membrane-bound lytic murein transglycosylase F (Alteromonas mediterranea (strain DSM 17117 / CIP 110805 / LMG 28347 / Deep ecotype)).